The primary structure comprises 607 residues: Matrix metalloproteinase-16 (607 aa).

The N-terminal stretch at 1–31 is a signal peptide; it reads MILLAFSSGRRLDFVHRSGVFFFQTLLWILC. A propeptide spanning residues 32–119 is cleaved from the precursor; the sequence is ATVCGTEQYF…SSKFNIRRKR (88 aa). Asparagine 83 carries an N-linked (GlcNAc...) asparagine glycan. The short motif at 99 to 106 is the Cysteine switch element; it reads PRCGVPDQ. Cysteine 101 contributes to the Zn(2+) binding site. Residues 120–564 are Extracellular-facing; that stretch reads YALTGQKWQH…LDNTASTVKA (445 aa). Residue aspartate 183 participates in Ca(2+) binding. Zn(2+) is bound by residues histidine 193 and aspartate 195. Residues aspartate 200, glycine 201, glycine 203, and phenylalanine 205 each coordinate Ca(2+). Position 208 (histidine 208) interacts with Zn(2+). Positions 215, 217, and 219 each coordinate Ca(2+). A Zn(2+)-binding site is contributed by histidine 221. Residues aspartate 223 and glutamate 226 each contribute to the Ca(2+) site. Histidine 246 is a Zn(2+) binding site. Glutamate 247 is an active-site residue. Zn(2+)-binding residues include histidine 250 and histidine 256. The tract at residues 281 to 340 is disordered; that stretch reads DDLQGIQKIYGPPDKIPPPTRPLPTVPPHRSVPPADPRKNDRPKPPRPPTGRPSYPGAKP. A compositionally biased stretch (pro residues) spans 294–315; that stretch reads DKIPPPTRPLPTVPPHRSVPPA. Hemopexin repeat units lie at residues 340–388, 389–434, 436–484, and 485–532; these read PNIC…WRGL, PPSI…GNGI, PHGI…KGIP, and ESPQ…FMGC. A disulfide bond links cysteine 343 and cysteine 532. Residues 565 to 585 form a helical membrane-spanning segment; that stretch reads IAIVIPCILALCLLVLVYTVF. Residues 586–607 lie on the Cytoplasmic side of the membrane; the sequence is QFKRKGTPRHILYCKRSMQEWV.

This sequence belongs to the peptidase M10A family. As to quaternary structure, interacts with CSPG4 through CSPG4 chondroitin sulfate glycosaminoglycan. Zn(2+) serves as cofactor. It depends on Ca(2+) as a cofactor. In terms of processing, the precursor is cleaved by a furin endopeptidase. In terms of tissue distribution, strongly expressed in the lung, brain and smooth muscle cells. Weakly detectable in the spleen and liver and indetectable in the heart, skeletal muscle and kidney.

It localises to the cell membrane. The protein localises to the secreted. It is found in the extracellular space. Its subcellular location is the extracellular matrix. Endopeptidase that degrades various components of the extracellular matrix, such as collagen type III and fibronectin. Activates progelatinase A. Involved in the matrix remodeling of blood vessels. The short isoform efficiently converts progelatinase A to the intermediate form but not to the mature one. It has no effect on type I, II, IV and V collagen. However, upon interaction with CSPG4, it may be involved in degradation and invasion of type I collagen by melanoma cells. This chain is Matrix metalloproteinase-16 (Mmp16), found in Rattus norvegicus (Rat).